A 995-amino-acid chain; its full sequence is tRNA wybutosine-synthesizing protein 2/3/4 (995 aa).

Residues 1–212 (MDFEKRKAAT…GFSVALASNG (212 aa)) are tRNA wybutosine-synthesizing protein 3 homolog. Kelch repeat units lie at residues 284–335 (EVIV…MVGD), 336–386 (FMFV…SVGT), 387–436 (KVYI…AYGS), 437–486 (QSFM…VYKH), and 488–535 (IGII…SILG). The segment at 661 to 995 (ERSEENNLTK…RHLVADVRCR (335 aa)) is tRNA wybutosine-synthesizing protein 2 homolog. Residues K828 and 896–897 (DN) contribute to the S-adenosyl-L-methionine site.

It in the C-terminal section; belongs to the class I-like SAM-binding methyltransferase superfamily. TRM5/TYW2 family. In the N-terminal section; belongs to the TYW3 family.

It carries out the reaction 4-demethyl-7-[(3S)-3-amino-3-carboxypropyl]wyosine(37) in tRNA(Phe) + S-adenosyl-L-methionine = 7-[(3S)-3-amino-3-carboxypropyl]wyosine(37) in tRNA(Phe) + S-adenosyl-L-homocysteine + H(+). It catalyses the reaction 4-demethylwyosine(37) in tRNA(Phe) + S-adenosyl-L-methionine = 4-demethyl-7-[(3S)-3-amino-3-carboxypropyl]wyosine(37) in tRNA(Phe) + S-methyl-5'-thioadenosine + H(+). It functions in the pathway tRNA modification; wybutosine-tRNA(Phe) biosynthesis. In terms of biological role, S-adenosyl-L-methionine-dependent transferase that acts as a component of the wybutosine biosynthesis pathway. Wybutosine is a hyper modified guanosine with a tricyclic base found at the 3'-position adjacent to the anticodon of eukaryotic phenylalanine tRNA. The protein is tRNA wybutosine-synthesizing protein 2/3/4 of Arabidopsis thaliana (Mouse-ear cress).